A 549-amino-acid chain; its full sequence is Hydroxylamine reductase (549 aa).

[4Fe-4S] cluster-binding residues include Cys-3, Cys-6, Cys-15, and Cys-21. Positions 248, 272, 316, 403, 431, 456, 490, and 492 each coordinate hybrid [4Fe-2O-2S] cluster. Cys-403 carries the cysteine persulfide modification.

Belongs to the HCP family. [4Fe-4S] cluster serves as cofactor. Requires hybrid [4Fe-2O-2S] cluster as cofactor.

The protein localises to the cytoplasm. The enzyme catalyses A + NH4(+) + H2O = hydroxylamine + AH2 + H(+). Functionally, catalyzes the reduction of hydroxylamine to form NH(3) and H(2)O. This Rhodospirillum rubrum (strain ATCC 11170 / ATH 1.1.1 / DSM 467 / LMG 4362 / NCIMB 8255 / S1) protein is Hydroxylamine reductase.